The primary structure comprises 369 residues: Spore membrane assembly protein 2 (369 aa).

Residues 1–6 are Cytoplasmic-facing; that stretch reads MLFPKR. Residues 7–27 form a helical membrane-spanning segment; sequence LIVWGVLLILSLSQFVLYLPA. Over 28–220 the chain is Lumenal; the sequence is TTCTNSKGLR…NLAFILMMFN (193 aa). A helical membrane pass occupies residues 221–241; it reads GMVFYFAVLEIIVGFLSICVV. At 242–265 the chain is on the cytoplasmic side; it reads SAFGGALSVGKRHRLFPILLKSSS. The chain crosses the membrane as a helical span at residues 266-286; that stretch reads SILVVIATLTILCNIVYLIAL. The Lumenal segment spans residues 287 to 319; the sequence is KTLEPEEVTDVGSDNAAVHTTGWELLKVNVGSG. A helical membrane pass occupies residues 320 to 340; it reads FIMGLARYAIQWVLLVLAFLA. Residues 341-369 are Cytoplasmic-facing; the sequence is ANHYKAKPKKSDKYTEDTSNSPSPDLMEK. The disordered stretch occupies residues 348-369; sequence PKKSDKYTEDTSNSPSPDLMEK.

The protein belongs to the SMA2 family.

It is found in the prospore membrane. The protein localises to the endoplasmic reticulum. In terms of biological role, involved in spore and ascus formation. Required for the efficient assembly of the precursors of the prospore membrane to a continuous prospore membrane. In Saccharomyces cerevisiae (strain YJM789) (Baker's yeast), this protein is Spore membrane assembly protein 2 (SMA2).